The primary structure comprises 484 residues: Ribosomal RNA small subunit methyltransferase F (484 aa).

Residues 119-125 (ASAPGSK), E143, D170, and D188 each bind S-adenosyl-L-methionine. C241 acts as the Nucleophile in catalysis.

The protein belongs to the class I-like SAM-binding methyltransferase superfamily. RsmB/NOP family.

The protein resides in the cytoplasm. The catalysed reaction is cytidine(1407) in 16S rRNA + S-adenosyl-L-methionine = 5-methylcytidine(1407) in 16S rRNA + S-adenosyl-L-homocysteine + H(+). Specifically methylates the cytosine at position 1407 (m5C1407) of 16S rRNA. This Shewanella frigidimarina (strain NCIMB 400) protein is Ribosomal RNA small subunit methyltransferase F.